Reading from the N-terminus, the 469-residue chain is UDP-N-acetylmuramate--L-alanine ligase (469 aa).

114–120 (GTHGKTT) contacts ATP.

It belongs to the MurCDEF family.

It localises to the cytoplasm. It catalyses the reaction UDP-N-acetyl-alpha-D-muramate + L-alanine + ATP = UDP-N-acetyl-alpha-D-muramoyl-L-alanine + ADP + phosphate + H(+). The protein operates within cell wall biogenesis; peptidoglycan biosynthesis. Cell wall formation. This chain is UDP-N-acetylmuramate--L-alanine ligase, found in Sinorhizobium fredii (strain NBRC 101917 / NGR234).